Reading from the N-terminus, the 370-residue chain is Histidinol-phosphate aminotransferase (370 aa).

At Lys231 the chain carries N6-(pyridoxal phosphate)lysine.

The protein belongs to the class-II pyridoxal-phosphate-dependent aminotransferase family. Histidinol-phosphate aminotransferase subfamily. Homodimer. Pyridoxal 5'-phosphate serves as cofactor.

It catalyses the reaction L-histidinol phosphate + 2-oxoglutarate = 3-(imidazol-4-yl)-2-oxopropyl phosphate + L-glutamate. The protein operates within amino-acid biosynthesis; L-histidine biosynthesis; L-histidine from 5-phospho-alpha-D-ribose 1-diphosphate: step 7/9. The protein is Histidinol-phosphate aminotransferase of Paracidovorax citrulli (strain AAC00-1) (Acidovorax citrulli).